The primary structure comprises 140 residues: Phosphopantetheine adenylyltransferase (140 aa).

Serine 9 contacts substrate. ATP-binding positions include 9–10 and histidine 17; that span reads SF. Lysine 41, threonine 74, and arginine 88 together coordinate substrate. ATP is bound by residues 89 to 91, glutamate 99, and 124 to 130; these read GLR and KRSLSST.

It belongs to the bacterial CoaD family. As to quaternary structure, homohexamer. The cofactor is Mg(2+).

Its subcellular location is the cytoplasm. The enzyme catalyses (R)-4'-phosphopantetheine + ATP + H(+) = 3'-dephospho-CoA + diphosphate. Its pathway is cofactor biosynthesis; coenzyme A biosynthesis; CoA from (R)-pantothenate: step 4/5. Its function is as follows. Reversibly transfers an adenylyl group from ATP to 4'-phosphopantetheine, yielding dephospho-CoA (dPCoA) and pyrophosphate. The protein is Phosphopantetheine adenylyltransferase of Mycoplasma capricolum subsp. capricolum (strain California kid / ATCC 27343 / NCTC 10154).